The primary structure comprises 293 residues: 33 kDa chaperonin (293 aa).

Cystine bridges form between C237–C239 and C271–C274.

This sequence belongs to the HSP33 family. Under oxidizing conditions two disulfide bonds are formed involving the reactive cysteines. Under reducing conditions zinc is bound to the reactive cysteines and the protein is inactive.

Its subcellular location is the cytoplasm. Its function is as follows. Redox regulated molecular chaperone. Protects both thermally unfolding and oxidatively damaged proteins from irreversible aggregation. Plays an important role in the bacterial defense system toward oxidative stress. In Haemophilus influenzae (strain PittEE), this protein is 33 kDa chaperonin.